The chain runs to 262 residues: MAFISSGYNPAKPMENRITDIGPRKFTEFFPPVIAKNAGNWDYHEILEPGILVHVAKNGDKVFTVRCGAARLMSTSHIREACEIAKKFCNGHLRFTTRNNIEFMVDNEETLKALVADLKTRKFAAGSFKFPIGGTGASISNIVHTQGWVYCHTPATDASGPVKAVMDELFEEFTSMRLPAIVRVSLACCINMCGAVHCSDIGLVGIHRKPPMIDHENLANLCEIPLAVAACPTAAVKPITAEVNGQKVKSVAINNDRCMYCG.

Positions 151, 188, 189, 193, 231, 258, and 261 each coordinate [4Fe-4S] cluster. A siroheme-binding site is contributed by Cys193.

As to quaternary structure, heterohexamer of two alpha, two beta and two gamma subunits. [4Fe-4S] cluster serves as cofactor. Requires siroheme as cofactor.

It carries out the reaction [DsrC protein]-trisulfide + NAD(+) + 3 H2O = [DsrC protein]-dithiol + sulfite + NADH + 3 H(+). In terms of biological role, catalyzes the reduction of sulfite to sulfide. This is the terminal oxidation reaction in sulfate respiration, a process catalyzed by the sulfate-reducing bacteria. In Megalodesulfovibrio gigas (strain ATCC 19364 / DSM 1382 / NCIMB 9332 / VKM B-1759) (Desulfovibrio gigas), this protein is Sulfite reductase, dissimilatory-type subunit beta (dsrB).